The sequence spans 491 residues: Cysteine--tRNA ligase (491 aa).

Cys-31 contacts Zn(2+). A 'HIGH' region motif is present at residues 33-43 (PTVYGDAHLGH). Residues Cys-226, His-251, and Glu-255 each contribute to the Zn(2+) site. The 'KMSKS' region signature appears at 283-287 (KMGKS). Residue Lys-286 participates in ATP binding.

The protein belongs to the class-I aminoacyl-tRNA synthetase family. Monomer. Zn(2+) serves as cofactor.

Its subcellular location is the cytoplasm. It carries out the reaction tRNA(Cys) + L-cysteine + ATP = L-cysteinyl-tRNA(Cys) + AMP + diphosphate. The polypeptide is Cysteine--tRNA ligase (Parabacteroides distasonis (strain ATCC 8503 / DSM 20701 / CIP 104284 / JCM 5825 / NCTC 11152)).